The following is a 620-amino-acid chain: Protein CNGC15b (620 aa).

6 consecutive transmembrane segments (helical) span residues 73-93 (IFLV…YLPI), 102-122 (IGIA…VFYV), 161-181 (GFFL…WIVI), 198-218 (FIII…SSQI), 237-257 (LMLY…LSIE), and 356-376 (GEIM…ALLI). 462-559 (LFDAMDERML…SSTRTVKAIS (98 aa)) is an a nucleoside 3',5'-cyclic phosphate binding site.

This sequence belongs to the cyclic nucleotide-gated cation channel (TC 1.A.1.5) family. As to quaternary structure, interacts (via N-terminus) with DMI1 (via c-terminus). The Nod factor has no effect on this interaction, implying that the complex is maintained after activation. In terms of tissue distribution, expressed in roots, stems, leaves, flowers and pods.

Its subcellular location is the nucleus membrane. Its function is as follows. Cyclic nucleotide-gated channel involved in the establishment of both rhizobial and mycorrhizal associations. Required for full activation of nuclear-localized Ca(2+) oscillations by Nod and Myc factors. Simultaneous activation of the K(+)-permeable channel DMI1 and the Ca(2+) channel CNGC15 can give rise to sustained Ca(2+) oscillations. May function during fertilization in both female and male gametophytic Ca(2+) signaling. The protein is Protein CNGC15b of Medicago truncatula (Barrel medic).